The sequence spans 360 residues: Probable dual-specificity RNA methyltransferase RlmN (360 aa).

Residue E97 is the Proton acceptor of the active site. The Radical SAM core domain occupies 103 to 330; it reads DGDRLTFCIS…TAVRRSRGLD (228 aa). Cysteines 110 and 335 form a disulfide. C117, C121, and C124 together coordinate [4Fe-4S] cluster. S-adenosyl-L-methionine is bound by residues 165–166, S197, 220–222, and H292; these read GE and SIH. C335 acts as the S-methylcysteine intermediate in catalysis.

This sequence belongs to the radical SAM superfamily. RlmN family. The cofactor is [4Fe-4S] cluster.

The protein localises to the cytoplasm. It catalyses the reaction adenosine(2503) in 23S rRNA + 2 reduced [2Fe-2S]-[ferredoxin] + 2 S-adenosyl-L-methionine = 2-methyladenosine(2503) in 23S rRNA + 5'-deoxyadenosine + L-methionine + 2 oxidized [2Fe-2S]-[ferredoxin] + S-adenosyl-L-homocysteine. The catalysed reaction is adenosine(37) in tRNA + 2 reduced [2Fe-2S]-[ferredoxin] + 2 S-adenosyl-L-methionine = 2-methyladenosine(37) in tRNA + 5'-deoxyadenosine + L-methionine + 2 oxidized [2Fe-2S]-[ferredoxin] + S-adenosyl-L-homocysteine. Specifically methylates position 2 of adenine 2503 in 23S rRNA and position 2 of adenine 37 in tRNAs. The protein is Probable dual-specificity RNA methyltransferase RlmN of Gemmatimonas aurantiaca (strain DSM 14586 / JCM 11422 / NBRC 100505 / T-27).